The primary structure comprises 277 residues: Urease accessory protein UreD (277 aa).

Belongs to the UreD family. In terms of assembly, ureD, UreF and UreG form a complex that acts as a GTP-hydrolysis-dependent molecular chaperone, activating the urease apoprotein by helping to assemble the nickel containing metallocenter of UreC. The UreE protein probably delivers the nickel.

The protein resides in the cytoplasm. Required for maturation of urease via the functional incorporation of the urease nickel metallocenter. This Sinorhizobium medicae (strain WSM419) (Ensifer medicae) protein is Urease accessory protein UreD.